Reading from the N-terminus, the 123-residue chain is MKIVLVFVCTLYLAQATYLSEQDVNEVSEFLEALDQANEAASEMVEAAETEEARDWECLPLHSSCDNDCVCCKNHHCHCPYSNVSKLEKWLPEWAKIPDALKRCSCQRNDKDGKINTCDKYKN.

Residues 1-16 form the signal peptide; sequence MKIVLVFVCTLYLAQA. A propeptide spanning residues 17–54 is cleaved from the precursor; the sequence is TYLSEQDVNEVSEFLEALDQANEAASEMVEAAETEEAR. Residues 55–122 enclose the Oxytoxin-type inhibitor cystine knot (ICK) domain; that stretch reads DWECLPLHSS…GKINTCDKYK (68 aa). Intrachain disulfides connect C58/C72, C65/C77, C69/C118, C71/C106, and C79/C104.

It belongs to the spiderine family. Spiderine subfamily. Post-translationally, mass spectrometry data suggest a carboxylated free C-terminal residue. In terms of tissue distribution, expressed by the venom gland.

It is found in the secreted. In terms of biological role, weak blocker of vertebrate P/Q-, N- and L-type voltage-gated calcium channels (Cav1 and Cav2). Is both paralytic and lethal when injected into lepidopteran larvae. Is not toxic to mice. In Oxyopes takobius (Lynx spider), this protein is Omega-oxotoxin-Ot1a.